The chain runs to 1011 residues: Antigenic heat-stable 120 kDa protein (1011 aa).

Disordered stretches follow at residues 1-37 (DTSE…TPAL), 54-73 (TPSM…TSDP), and 348-396 (GQSK…PQSQ). Residues 12-27 (EYTEEQKQTEEQEQKE) are compositionally biased toward basic and acidic residues. Polar residues-rich tracts occupy residues 348-373 (GQSK…QYKQ) and 380-396 (PTNQ…PQSQ).

The protein localises to the cytoplasm. In Rickettsia sibirica subsp. mongolitimonae (Rickettsia mongolotimonae), this protein is Antigenic heat-stable 120 kDa protein (sca4).